A 388-amino-acid chain; its full sequence is Succinate--CoA ligase [ADP-forming] subunit beta (388 aa).

Residues 9 to 244 (KALFAEYGLP…PSQDDAREAH (236 aa)) enclose the ATP-grasp domain. ATP is bound by residues lysine 46, 53 to 55 (GRG), glutamate 99, threonine 102, and glutamate 107. Mg(2+) contacts are provided by asparagine 199 and aspartate 213. Residues asparagine 264 and 321 to 323 (GIV) contribute to the substrate site.

The protein belongs to the succinate/malate CoA ligase beta subunit family. As to quaternary structure, heterotetramer of two alpha and two beta subunits. It depends on Mg(2+) as a cofactor.

The enzyme catalyses succinate + ATP + CoA = succinyl-CoA + ADP + phosphate. The catalysed reaction is GTP + succinate + CoA = succinyl-CoA + GDP + phosphate. It participates in carbohydrate metabolism; tricarboxylic acid cycle; succinate from succinyl-CoA (ligase route): step 1/1. In terms of biological role, succinyl-CoA synthetase functions in the citric acid cycle (TCA), coupling the hydrolysis of succinyl-CoA to the synthesis of either ATP or GTP and thus represents the only step of substrate-level phosphorylation in the TCA. The beta subunit provides nucleotide specificity of the enzyme and binds the substrate succinate, while the binding sites for coenzyme A and phosphate are found in the alpha subunit. The protein is Succinate--CoA ligase [ADP-forming] subunit beta of Shewanella loihica (strain ATCC BAA-1088 / PV-4).